The following is a 223-amino-acid chain: Deoxyribose-phosphate aldolase (223 aa).

D91 functions as the Proton donor/acceptor in the catalytic mechanism. K154 serves as the catalytic Schiff-base intermediate with acetaldehyde. The active-site Proton donor/acceptor is K183.

Belongs to the DeoC/FbaB aldolase family. DeoC type 1 subfamily.

Its subcellular location is the cytoplasm. It catalyses the reaction 2-deoxy-D-ribose 5-phosphate = D-glyceraldehyde 3-phosphate + acetaldehyde. The protein operates within carbohydrate degradation; 2-deoxy-D-ribose 1-phosphate degradation; D-glyceraldehyde 3-phosphate and acetaldehyde from 2-deoxy-alpha-D-ribose 1-phosphate: step 2/2. In terms of biological role, catalyzes a reversible aldol reaction between acetaldehyde and D-glyceraldehyde 3-phosphate to generate 2-deoxy-D-ribose 5-phosphate. The chain is Deoxyribose-phosphate aldolase from Lysinibacillus sphaericus (strain C3-41).